The primary structure comprises 227 residues: ATP synthase F(0) complex subunit a (227 aa).

6 helical membrane-spanning segments follow: residues 14 to 34, 69 to 89, 98 to 118, 139 to 159, 167 to 187, and 190 to 210; these read LLGH…FPSP, WALM…LGLL, QLSM…LTGL, IPAL…ALGV, AGHL…PILP, and SILT…VAMI.

This sequence belongs to the ATPase A chain family. Component of the ATP synthase complex composed at least of ATP5F1A/subunit alpha, ATP5F1B/subunit beta, ATP5MC1/subunit c (homooctomer), MT-ATP6/subunit a, MT-ATP8/subunit 8, ATP5ME/subunit e, ATP5MF/subunit f, ATP5MG/subunit g, ATP5MK/subunit k, ATP5MJ/subunit j, ATP5F1C/subunit gamma, ATP5F1D/subunit delta, ATP5F1E/subunit epsilon, ATP5PF/subunit F6, ATP5PB/subunit b, ATP5PD/subunit d, ATP5PO/subunit OSCP. ATP synthase complex consists of a soluble F(1) head domain (subunits alpha(3) and beta(3)) - the catalytic core - and a membrane F(0) domain - the membrane proton channel (subunits c, a, 8, e, f, g, k and j). These two domains are linked by a central stalk (subunits gamma, delta, and epsilon) rotating inside the F1 region and a stationary peripheral stalk (subunits F6, b, d, and OSCP). Interacts with DNAJC30; interaction is direct.

The protein localises to the mitochondrion inner membrane. The catalysed reaction is H(+)(in) = H(+)(out). Subunit a, of the mitochondrial membrane ATP synthase complex (F(1)F(0) ATP synthase or Complex V) that produces ATP from ADP in the presence of a proton gradient across the membrane which is generated by electron transport complexes of the respiratory chain. ATP synthase complex consist of a soluble F(1) head domain - the catalytic core - and a membrane F(1) domain - the membrane proton channel. These two domains are linked by a central stalk rotating inside the F(1) region and a stationary peripheral stalk. During catalysis, ATP synthesis in the catalytic domain of F(1) is coupled via a rotary mechanism of the central stalk subunits to proton translocation. With the subunit c (ATP5MC1), forms the proton-conducting channel in the F(0) domain, that contains two crucial half-channels (inlet and outlet) that facilitate proton movement from the mitochondrial intermembrane space (IMS) into the matrix. Protons are taken up via the inlet half-channel and released through the outlet half-channel, following a Grotthuss mechanism. The chain is ATP synthase F(0) complex subunit a from Anas platyrhynchos (Mallard).